The following is a 211-amino-acid chain: Cytochrome c biogenesis ATP-binding export protein CcmA (211 aa).

The 193-residue stretch at 17 to 209 (LDVEDVTVFR…PSLAHVESFW (193 aa)) folds into the ABC transporter domain. Residue 49 to 56 (GPNGAGKS) coordinates ATP.

The protein belongs to the ABC transporter superfamily. CcmA exporter (TC 3.A.1.107) family. As to quaternary structure, the complex is composed of two ATP-binding proteins (CcmA) and two transmembrane proteins (CcmB).

It is found in the cell inner membrane. It carries out the reaction heme b(in) + ATP + H2O = heme b(out) + ADP + phosphate + H(+). In terms of biological role, part of the ABC transporter complex CcmAB involved in the biogenesis of c-type cytochromes; once thought to export heme, this seems not to be the case, but its exact role is uncertain. Responsible for energy coupling to the transport system. The sequence is that of Cytochrome c biogenesis ATP-binding export protein CcmA from Gluconobacter oxydans (strain 621H) (Gluconobacter suboxydans).